A 325-amino-acid chain; its full sequence is Histone-lysine N-methyltransferase ATXR4 (325 aa).

A signal peptide spans 1 to 30 (MSRLALNRYSRCFSRLKTLTTPLFFSSSAA). The SET domain occupies 42–295 (PPIRVGLTES…EGEELRICYI (254 aa)).

This sequence belongs to the class V-like SAM-binding methyltransferase superfamily. Histone-lysine methyltransferase family. TRX/MLL subfamily.

It localises to the nucleus. It carries out the reaction L-lysyl-[histone] + S-adenosyl-L-methionine = N(6)-methyl-L-lysyl-[histone] + S-adenosyl-L-homocysteine + H(+). Functionally, histone methyltransferase. This is Histone-lysine N-methyltransferase ATXR4 (ATXR4) from Arabidopsis thaliana (Mouse-ear cress).